A 219-amino-acid polypeptide reads, in one-letter code: NADH-quinone oxidoreductase subunit C (219 aa).

This sequence belongs to the complex I 30 kDa subunit family. NDH-1 is composed of 14 different subunits. Subunits NuoB, C, D, E, F, and G constitute the peripheral sector of the complex.

Its subcellular location is the cell inner membrane. It catalyses the reaction a quinone + NADH + 5 H(+)(in) = a quinol + NAD(+) + 4 H(+)(out). Its function is as follows. NDH-1 shuttles electrons from NADH, via FMN and iron-sulfur (Fe-S) centers, to quinones in the respiratory chain. The immediate electron acceptor for the enzyme in this species is believed to be ubiquinone. Couples the redox reaction to proton translocation (for every two electrons transferred, four hydrogen ions are translocated across the cytoplasmic membrane), and thus conserves the redox energy in a proton gradient. This chain is NADH-quinone oxidoreductase subunit C, found in Methylorubrum extorquens (strain PA1) (Methylobacterium extorquens).